The following is a 187-amino-acid chain: Peptidyl-tRNA hydrolase (187 aa).

TRNA is bound at residue Tyr18. Catalysis depends on His23, which acts as the Proton acceptor. Residues Phe65, Asn67, and Asn113 each coordinate tRNA.

It belongs to the PTH family. Monomer.

The protein localises to the cytoplasm. It catalyses the reaction an N-acyl-L-alpha-aminoacyl-tRNA + H2O = an N-acyl-L-amino acid + a tRNA + H(+). In terms of biological role, hydrolyzes ribosome-free peptidyl-tRNAs (with 1 or more amino acids incorporated), which drop off the ribosome during protein synthesis, or as a result of ribosome stalling. Functionally, catalyzes the release of premature peptidyl moieties from peptidyl-tRNA molecules trapped in stalled 50S ribosomal subunits, and thus maintains levels of free tRNAs and 50S ribosomes. The chain is Peptidyl-tRNA hydrolase from Coxiella burnetii (strain CbuK_Q154) (Coxiella burnetii (strain Q154)).